Here is a 116-residue protein sequence, read N- to C-terminus: Cysteine-rich venom protein Cau1 (116 aa).

Positions 4 to 42 constitute an SCP domain; the sequence is SYAVVGHYTQIVWYKSDRIGCAAAYCPSSVYNYFYVCQY. Intrachain disulfides connect Cys24–Cys40, Cys62–Cys69, Cys65–Cys74, Cys87–Cys105, and Cys96–Cys109. The ShKT domain occupies 78–111; it reads CRVEDEFINCKDMAESRDCQDNYMMTNCAAFCSC.

The protein belongs to the CRISP family. As to expression, expressed by the venom gland.

The protein resides in the secreted. Blocks contraction of smooth muscle elicited by high potassium-induced depolarization, but does not block caffeine-stimulated contraction. May target voltage-gated calcium channels on smooth muscle. The polypeptide is Cysteine-rich venom protein Cau1 (Causus rhombeatus (Rhombic night adder)).